Here is a 120-residue protein sequence, read N- to C-terminus: NAD(P)H-quinone oxidoreductase subunit 3 (120 aa).

The next 3 membrane-spanning stretches (helical) occupy residues 10-30, 64-84, and 89-109; these read FLGFLLIAAAVPILALVTNLI, MFALVFVIFDVETVFLYPWAV, and LGLLAFIEALIFIAILVIALA.

It belongs to the complex I subunit 3 family. NDH-1 can be composed of about 15 different subunits; different subcomplexes with different compositions have been identified which probably have different functions.

Its subcellular location is the cellular thylakoid membrane. It catalyses the reaction a plastoquinone + NADH + (n+1) H(+)(in) = a plastoquinol + NAD(+) + n H(+)(out). The enzyme catalyses a plastoquinone + NADPH + (n+1) H(+)(in) = a plastoquinol + NADP(+) + n H(+)(out). Functionally, NDH-1 shuttles electrons from an unknown electron donor, via FMN and iron-sulfur (Fe-S) centers, to quinones in the respiratory and/or the photosynthetic chain. The immediate electron acceptor for the enzyme in this species is believed to be plastoquinone. Couples the redox reaction to proton translocation, and thus conserves the redox energy in a proton gradient. Cyanobacterial NDH-1 also plays a role in inorganic carbon-concentration. This chain is NAD(P)H-quinone oxidoreductase subunit 3, found in Prochlorococcus marinus (strain MIT 9312).